We begin with the raw amino-acid sequence, 159 residues long: Phosphopantetheine adenylyltransferase (159 aa).

Ser8 provides a ligand contact to substrate. Residues 8–9 (SF) and His16 contribute to the ATP site. Residues Lys40, Leu73, and Lys87 each coordinate substrate. Residues 88-90 (GLR), Glu98, and 122-128 (YGYVSST) contribute to the ATP site.

This sequence belongs to the bacterial CoaD family. Homohexamer. Mg(2+) serves as cofactor.

It localises to the cytoplasm. The enzyme catalyses (R)-4'-phosphopantetheine + ATP + H(+) = 3'-dephospho-CoA + diphosphate. Its pathway is cofactor biosynthesis; coenzyme A biosynthesis; CoA from (R)-pantothenate: step 4/5. Its function is as follows. Reversibly transfers an adenylyl group from ATP to 4'-phosphopantetheine, yielding dephospho-CoA (dPCoA) and pyrophosphate. The chain is Phosphopantetheine adenylyltransferase from Corynebacterium efficiens (strain DSM 44549 / YS-314 / AJ 12310 / JCM 11189 / NBRC 100395).